The primary structure comprises 173 residues: uncharacterized protein (173 aa).

Basic and acidic residues predominate over residues Met-1–Lys-11. The segment at Met-1–Tyr-173 is disordered. Positions Phe-17–Ile-41 are enriched in polar residues. Composition is skewed to basic and acidic residues over residues Lys-56–Asn-109 and Ala-120–Lys-144. Over residues Lys-145–Lys-156 the composition is skewed to basic residues. Over residues Asn-157 to Tyr-173 the composition is skewed to basic and acidic residues.

This is an uncharacterized protein from Caenorhabditis elegans.